A 130-amino-acid chain; its full sequence is Hydrogenase maturation factor HypA (130 aa).

His-2 is a binding site for Ni(2+). The Zn(2+) site is built by Cys-74, Cys-77, Cys-90, and Cys-93.

The protein belongs to the HypA/HybF family.

In terms of biological role, involved in the maturation of [NiFe] hydrogenases. Required for nickel insertion into the metal center of the hydrogenase. The polypeptide is Hydrogenase maturation factor HypA (Desulfatibacillum aliphaticivorans).